The sequence spans 78 residues: Leukemia-associated protein 1 (78 aa).

In terms of biological role, may act as a tumor suppressor. In Homo sapiens (Human), this protein is Leukemia-associated protein 1 (DLEU1).